Consider the following 509-residue polypeptide: GMP synthase [glutamine-hydrolyzing] (509 aa).

The Glutamine amidotransferase type-1 domain occupies 4 to 193 (KILILDFGSQ…VVHICGCSQD (190 aa)). Cys-79 acts as the Nucleophile in catalysis. Catalysis depends on residues His-167 and Glu-169. Positions 194 to 384 (WTPDAFVETT…LGIDDIILKR (191 aa)) constitute a GMPS ATP-PPase domain. Residue 221–227 (SGGVDSS) coordinates ATP.

As to quaternary structure, homodimer.

The enzyme catalyses XMP + L-glutamine + ATP + H2O = GMP + L-glutamate + AMP + diphosphate + 2 H(+). The protein operates within purine metabolism; GMP biosynthesis; GMP from XMP (L-Gln route): step 1/1. Functionally, catalyzes the synthesis of GMP from XMP. This chain is GMP synthase [glutamine-hydrolyzing], found in Cytophaga hutchinsonii (strain ATCC 33406 / DSM 1761 / CIP 103989 / NBRC 15051 / NCIMB 9469 / D465).